Here is a 560-residue protein sequence, read N- to C-terminus: DNA ligase B (560 aa).

The active-site N6-AMP-lysine intermediate is Lys124.

It belongs to the NAD-dependent DNA ligase family. LigB subfamily.

It catalyses the reaction NAD(+) + (deoxyribonucleotide)n-3'-hydroxyl + 5'-phospho-(deoxyribonucleotide)m = (deoxyribonucleotide)n+m + AMP + beta-nicotinamide D-nucleotide.. Its function is as follows. Catalyzes the formation of phosphodiester linkages between 5'-phosphoryl and 3'-hydroxyl groups in double-stranded DNA using NAD as a coenzyme and as the energy source for the reaction. The sequence is that of DNA ligase B from Escherichia coli (strain K12 / DH10B).